A 221-amino-acid polypeptide reads, in one-letter code: UPF0758 protein Ent638_0101 (221 aa).

An MPN domain is found at 99–221 (PLLSPEMTKD…YVSFAEQGWI (123 aa)). Histidine 170, histidine 172, and aspartate 183 together coordinate Zn(2+). The JAMM motif signature appears at 170-183 (HNHPSGCAEPSKAD).

Belongs to the UPF0758 family. YicR subfamily.

This Enterobacter sp. (strain 638) protein is UPF0758 protein Ent638_0101.